Reading from the N-terminus, the 142-residue chain is Multiprotein-bridging factor 1a (142 aa).

A compositionally biased stretch (polar residues) spans 51–64; sequence GTNKAASSGTSLNT. The interval 51-77 is disordered; the sequence is GTNKAASSGTSLNTKMLDDDTENLTHE. The HTH cro/C1-type domain maps to 87 to 141; the sequence is IMQARTDKKLTQSQLAQIINEKPQVIQEYESGKAIPNQQILSKLERALGAKLRGK. Positions 98–117 form a DNA-binding region, H-T-H motif; that stretch reads QSQLAQIINEKPQVIQEYES.

It belongs to the MBF1 family. In terms of tissue distribution, expressed in leaves, roots, stems, flowers, siliques and shoots. Detected only in anthers and some seeds in siliques.

It is found in the nucleus. The protein resides in the nucleolus. Its function is as follows. Transcriptional coactivator that stimulates transcriptional activity by bridging regulatory proteins and TBP, thereby recruiting TBP to promoters occupied by DNA-binding regulators. The protein is Multiprotein-bridging factor 1a (MBF1A) of Arabidopsis thaliana (Mouse-ear cress).